The following is a 387-amino-acid chain: 1-deoxy-D-xylulose 5-phosphate reductoisomerase (387 aa).

Thr-10, Gly-11, Ser-12, Ile-13, Gly-36, Arg-37, and Asn-124 together coordinate NADPH. Lys-125 is a binding site for 1-deoxy-D-xylulose 5-phosphate. Glu-126 is a binding site for NADPH. Asp-150 serves as a coordination point for Mn(2+). Residues Ser-151, Glu-152, Ser-176, and His-199 each contribute to the 1-deoxy-D-xylulose 5-phosphate site. Mn(2+) is bound at residue Glu-152. NADPH is bound at residue Gly-205. Ser-212, Asn-217, Lys-218, and Glu-221 together coordinate 1-deoxy-D-xylulose 5-phosphate. Residue Glu-221 coordinates Mn(2+).

Belongs to the DXR family. Mg(2+) is required as a cofactor. It depends on Mn(2+) as a cofactor.

The catalysed reaction is 2-C-methyl-D-erythritol 4-phosphate + NADP(+) = 1-deoxy-D-xylulose 5-phosphate + NADPH + H(+). It participates in isoprenoid biosynthesis; isopentenyl diphosphate biosynthesis via DXP pathway; isopentenyl diphosphate from 1-deoxy-D-xylulose 5-phosphate: step 1/6. In terms of biological role, catalyzes the NADPH-dependent rearrangement and reduction of 1-deoxy-D-xylulose-5-phosphate (DXP) to 2-C-methyl-D-erythritol 4-phosphate (MEP). This chain is 1-deoxy-D-xylulose 5-phosphate reductoisomerase, found in Cyanothece sp. (strain PCC 7425 / ATCC 29141).